The sequence spans 399 residues: 26S proteasome regulatory subunit S10B homolog B (399 aa).

ATP is bound at residue 180–187 (GPPGTGKT). Residue lysine 203 forms a Glycyl lysine isopeptide (Lys-Gly) (interchain with G-Cter in ubiquitin) linkage.

This sequence belongs to the AAA ATPase family. Component of the 19S regulatory particle (RP/PA700) base subcomplex of the 26S proteasome. The 26S proteasome is composed of a core protease (CP), known as the 20S proteasome, capped at one or both ends by the 19S regulatory particle (RP/PA700). The RP/PA700 complex is composed of at least 17 different subunits in two subcomplexes, the base and the lid, which form the portions proximal and distal to the 20S proteolytic core, respectively.

The protein localises to the cytoplasm. It localises to the nucleus. Its function is as follows. The 26S proteasome is involved in the ATP-dependent degradation of ubiquitinated proteins. The regulatory (or ATPase) complex confers ATP dependency and substrate specificity to the 26S complex. The chain is 26S proteasome regulatory subunit S10B homolog B (RPT4B) from Arabidopsis thaliana (Mouse-ear cress).